The sequence spans 142 residues: Large ribosomal subunit protein uL11 (142 aa).

The protein belongs to the universal ribosomal protein uL11 family. Part of the ribosomal stalk of the 50S ribosomal subunit. Interacts with L10 and the large rRNA to form the base of the stalk. L10 forms an elongated spine to which L12 dimers bind in a sequential fashion forming a multimeric L10(L12)X complex. One or more lysine residues are methylated.

Forms part of the ribosomal stalk which helps the ribosome interact with GTP-bound translation factors. This Vibrio campbellii (strain ATCC BAA-1116) protein is Large ribosomal subunit protein uL11.